The chain runs to 167 residues: UPF0262 protein Nwi_0248 (167 aa).

The protein belongs to the UPF0262 family.

The polypeptide is UPF0262 protein Nwi_0248 (Nitrobacter winogradskyi (strain ATCC 25391 / DSM 10237 / CIP 104748 / NCIMB 11846 / Nb-255)).